The primary structure comprises 148 residues: Urease accessory protein UreE (148 aa).

The protein belongs to the UreE family.

It localises to the cytoplasm. In terms of biological role, involved in urease metallocenter assembly. Binds nickel. Probably functions as a nickel donor during metallocenter assembly. The protein is Urease accessory protein UreE of Lysinibacillus sphaericus (strain C3-41).